The sequence spans 172 residues: Translation initiation factor IF-3 (172 aa).

This sequence belongs to the IF-3 family. Monomer.

Its subcellular location is the cytoplasm. In terms of biological role, IF-3 binds to the 30S ribosomal subunit and shifts the equilibrium between 70S ribosomes and their 50S and 30S subunits in favor of the free subunits, thus enhancing the availability of 30S subunits on which protein synthesis initiation begins. This chain is Translation initiation factor IF-3, found in Campylobacter concisus (strain 13826).